The following is a 366-amino-acid chain: Flagellar P-ring protein (366 aa).

The N-terminal stretch at 1–19 (MTLIRLLACLLFLPCLAQA) is a signal peptide.

The protein belongs to the FlgI family. The basal body constitutes a major portion of the flagellar organelle and consists of four rings (L,P,S, and M) mounted on a central rod.

It localises to the periplasm. It is found in the bacterial flagellum basal body. In terms of biological role, assembles around the rod to form the L-ring and probably protects the motor/basal body from shearing forces during rotation. This chain is Flagellar P-ring protein, found in Ruegeria pomeroyi (strain ATCC 700808 / DSM 15171 / DSS-3) (Silicibacter pomeroyi).